The chain runs to 396 residues: Putative nickel insertion protein (396 aa).

The protein belongs to the LarC family.

The sequence is that of Putative nickel insertion protein from Methanosarcina acetivorans (strain ATCC 35395 / DSM 2834 / JCM 12185 / C2A).